Reading from the N-terminus, the 216-residue chain is MFTQHHAQFPNVSAAIAAFQAGRPVLLLDDDDREDEADIIAAAENITLQTMAMMIRDCSGIVCLCLDEATVDELQLAPMVQNNQARHGTGFTVTIEAAEGITTGVSAQDRITTIDAALRSSAEQRHIVSPGHVFPLRARNGGVLTRRGHTEGSVDLARLAGLRPAAVLCELMNPDGSMARGEQVAVYARQYNLPVLTIEELARYREAMLEREAEPA.

Residues 33–34 (RE), aspartate 38, 146–150 (RRGHT), and glutamate 170 contribute to the D-ribulose 5-phosphate site. Mg(2+) is bound at residue glutamate 34. Mg(2+) is bound at residue histidine 149.

The protein belongs to the DHBP synthase family. As to quaternary structure, homodimer. It depends on Mg(2+) as a cofactor. The cofactor is Mn(2+).

It carries out the reaction D-ribulose 5-phosphate = (2S)-2-hydroxy-3-oxobutyl phosphate + formate + H(+). The protein operates within cofactor biosynthesis; riboflavin biosynthesis; 2-hydroxy-3-oxobutyl phosphate from D-ribulose 5-phosphate: step 1/1. Catalyzes the conversion of D-ribulose 5-phosphate to formate and 3,4-dihydroxy-2-butanone 4-phosphate. In Pseudomonas putida (strain ATCC 47054 / DSM 6125 / CFBP 8728 / NCIMB 11950 / KT2440), this protein is 3,4-dihydroxy-2-butanone 4-phosphate synthase.